Here is a 203-residue protein sequence, read N- to C-terminus: Reticulon-like protein B12 (203 aa).

The region spanning Val-24–Ser-203 is the Reticulon domain. Transmembrane regions (helical) follow at residues Asn-34–Ala-54, Tyr-55–Trp-75, and Val-132–Cys-152.

The protein resides in the endoplasmic reticulum membrane. This Arabidopsis thaliana (Mouse-ear cress) protein is Reticulon-like protein B12 (RTNLB12).